Here is a 201-residue protein sequence, read N- to C-terminus: MLAFTLRFIKNKRYFAILAGALVIIAGLTSQHAWSGNGLPQINGKALAALAKQHPVVVLFRHAERCDRSDNTCLSDSTGITVKGAQDARALGKAFSADIQNYNLYSSNTVRTIQSATWFSAGRSLTVDKKMMDCGSGIYASINTLLKKSQNKNIVIFTHNHCLTYIAKNKRGVKFDPDYLNALVMHAENGKLFLDGEFVPG.

A signal peptide spans 1-35; that stretch reads MLAFTLRFIKNKRYFAILAGALVIIAGLTSQHAWS.

It belongs to the phosphoglycerate mutase family. Ais subfamily.

The protein localises to the periplasm. It functions in the pathway bacterial outer membrane biogenesis; lipopolysaccharide metabolism. In terms of biological role, catalyzes the dephosphorylation of heptose(II) of the outer membrane lipopolysaccharide core. The sequence is that of Lipopolysaccharide core heptose(II)-phosphate phosphatase from Salmonella enteritidis PT4 (strain P125109).